A 113-amino-acid polypeptide reads, in one-letter code: uncharacterized protein (113 aa).

A signal peptide spans 1–22 (MCRFPTFLLIAIAITMLPTILS). An N-linked (GlcNAc...) asparagine glycan is attached at Asn-47.

It is found in the secreted. This is an uncharacterized protein from Caenorhabditis elegans.